A 356-amino-acid polypeptide reads, in one-letter code: Thiamine thiazole synthase, chloroplastic (356 aa).

Residues Met1–Ser51 constitute a chloroplast transit peptide. Substrate contacts are provided by residues Ala101, Glu121–Gln122, Gly129, and Ala194. The residue at position 223 (Cys223) is a 2,3-didehydroalanine (Cys). Residues Asp225, His240, Met292, and Arg302–Gly304 each bind substrate.

Belongs to the THI4 family. In terms of assembly, homooctamer. It depends on Fe cation as a cofactor. In terms of processing, during the catalytic reaction, a sulfide is transferred from Cys-223 to a reaction intermediate, generating a dehydroalanine residue.

It is found in the plastid. The protein resides in the chloroplast. The catalysed reaction is [ADP-thiazole synthase]-L-cysteine + glycine + NAD(+) = [ADP-thiazole synthase]-dehydroalanine + ADP-5-ethyl-4-methylthiazole-2-carboxylate + nicotinamide + 3 H2O + 2 H(+). In terms of biological role, involved in biosynthesis of the thiamine precursor thiazole. Catalyzes the conversion of NAD and glycine to adenosine diphosphate 5-(2-hydroxyethyl)-4-methylthiazole-2-carboxylic acid (ADT), an adenylated thiazole intermediate. The reaction includes an iron-dependent sulfide transfer from a conserved cysteine residue of the protein to a thiazole intermediate. The enzyme can only undergo a single turnover, which suggests it is a suicide enzyme. May have additional roles in adaptation to various stress conditions and in DNA damage tolerance. This chain is Thiamine thiazole synthase, chloroplastic, found in Citrus sinensis (Sweet orange).